The primary structure comprises 366 residues: Chorismate synthase (366 aa).

Positions 48 and 54 each coordinate NADP(+). Residues 125–127, 238–239, Gly278, 293–297, and Arg319 contribute to the FMN site; these read RSS, NA, and KPTSS.

It belongs to the chorismate synthase family. In terms of assembly, homotetramer. The cofactor is FMNH2.

The catalysed reaction is 5-O-(1-carboxyvinyl)-3-phosphoshikimate = chorismate + phosphate. It functions in the pathway metabolic intermediate biosynthesis; chorismate biosynthesis; chorismate from D-erythrose 4-phosphate and phosphoenolpyruvate: step 7/7. Catalyzes the anti-1,4-elimination of the C-3 phosphate and the C-6 proR hydrogen from 5-enolpyruvylshikimate-3-phosphate (EPSP) to yield chorismate, which is the branch point compound that serves as the starting substrate for the three terminal pathways of aromatic amino acid biosynthesis. This reaction introduces a second double bond into the aromatic ring system. The sequence is that of Chorismate synthase from Paraburkholderia phytofirmans (strain DSM 17436 / LMG 22146 / PsJN) (Burkholderia phytofirmans).